The primary structure comprises 214 residues: Large ribosomal subunit protein uL3 (214 aa).

Gln-151 carries the N5-methylglutamine modification.

It belongs to the universal ribosomal protein uL3 family. In terms of assembly, part of the 50S ribosomal subunit. Forms a cluster with proteins L14 and L19. Methylated by PrmB.

One of the primary rRNA binding proteins, it binds directly near the 3'-end of the 23S rRNA, where it nucleates assembly of the 50S subunit. The sequence is that of Large ribosomal subunit protein uL3 from Saccharophagus degradans (strain 2-40 / ATCC 43961 / DSM 17024).